We begin with the raw amino-acid sequence, 210 residues long: Uridine kinase (210 aa).

Residue G14–T21 coordinates ATP.

This sequence belongs to the uridine kinase family.

It is found in the cytoplasm. It catalyses the reaction uridine + ATP = UMP + ADP + H(+). The enzyme catalyses cytidine + ATP = CMP + ADP + H(+). It participates in pyrimidine metabolism; CTP biosynthesis via salvage pathway; CTP from cytidine: step 1/3. It functions in the pathway pyrimidine metabolism; UMP biosynthesis via salvage pathway; UMP from uridine: step 1/1. The polypeptide is Uridine kinase (Deinococcus radiodurans (strain ATCC 13939 / DSM 20539 / JCM 16871 / CCUG 27074 / LMG 4051 / NBRC 15346 / NCIMB 9279 / VKM B-1422 / R1)).